Consider the following 307-residue polypeptide: Nucleotide-binding protein Acid345_3782 (307 aa).

G31–A38 serves as a coordination point for ATP. D81–E84 provides a ligand contact to GTP.

It belongs to the RapZ-like family.

Its function is as follows. Displays ATPase and GTPase activities. The sequence is that of Nucleotide-binding protein Acid345_3782 from Koribacter versatilis (strain Ellin345).